The following is a 232-amino-acid chain: RNA chaperone ProQ (232 aa).

A disordered region spans residues 105–182 (EAKARVQAQR…REEQHTPVSD (78 aa)). The segment covering 117 to 136 (QQAKKREAAATAGEKEDAPR) has biased composition (basic and acidic residues). Residues 137-146 (RERKPRPTTP) show a composition bias toward basic residues. Positions 147-177 (RRKEGAERKPRAQKPVEKAPKTVKAPREEQH) are enriched in basic and acidic residues.

It belongs to the ProQ family.

It is found in the cytoplasm. In terms of biological role, RNA chaperone with significant RNA binding, RNA strand exchange and RNA duplexing activities. May regulate ProP activity through an RNA-based, post-transcriptional mechanism. This is RNA chaperone ProQ from Escherichia coli (strain K12).